The chain runs to 211 residues: Synaptosomal-associated protein 23 (211 aa).

The residue at position 1 (Met-1) is an N-acetylmethionine. Phosphoserine occurs at positions 5, 6, 20, 23, and 34. Positions 14 to 76 (HQITDESLES…RETEKTLTEL (63 aa)) constitute a t-SNARE coiled-coil homology 1 domain. A coiled-coil region spans residues 23–76 (STRRILGLAIESQDAGIKTITMLDEQKEQLNRIEEGLDQINKDMRETEKTLTEL). 5 S-palmitoyl cysteine lipidation sites follow: Cys-79, Cys-80, Cys-83, Cys-85, and Cys-87. Ser-110 carries the post-translational modification Phosphoserine. Cys-112 carries the S-palmitoyl cysteine lipid modification. Residues 146-208 (DAREDEMEEN…DIANARAKKL (63 aa)) enclose the t-SNARE coiled-coil homology 2 domain. The residue at position 161 (Ser-161) is a Phosphoserine.

It belongs to the SNAP-25 family. Homotetramer (via coiled-coil domain), also forms heterotetramers with STX4 and VAMP3. Found in a complex with VAMP8 and STX1A. Found in a complex with VAMP8 and STX4 in pancreas. Interacts simultaneously with SNAPIN and SYN4. Interacts with STX1A. Interacts with STX12. Interacts tightly to multiple syntaxins and synaptobrevins/VAMPs. Interacts with ZDHHC13 (via ANK repeats). Interacts with ZDHHC17 (via ANK repeats). As to expression, ubiquitous. Highest levels where found in placenta.

Its subcellular location is the cell membrane. The protein resides in the synapse. The protein localises to the synaptosome. Essential component of the high affinity receptor for the general membrane fusion machinery and an important regulator of transport vesicle docking and fusion. The protein is Synaptosomal-associated protein 23 (SNAP23) of Homo sapiens (Human).